Here is a 152-residue protein sequence, read N- to C-terminus: Transcription elongation factor Spt5 (152 aa).

The KOW domain occupies 99-129; it reads EGDLVEVISGPFRGMQAQVVRVESTKNEVVL.

It belongs to the archaeal Spt5 family. Heterodimer composed of Spt4 and Spt5. Interacts with RNA polymerase (RNAP).

Stimulates transcription elongation. This chain is Transcription elongation factor Spt5, found in Sulfolobus acidocaldarius (strain ATCC 33909 / DSM 639 / JCM 8929 / NBRC 15157 / NCIMB 11770).